Reading from the N-terminus, the 328-residue chain is D-cysteine desulfhydrase (328 aa).

At Lys-51 the chain carries N6-(pyridoxal phosphate)lysine.

The protein belongs to the ACC deaminase/D-cysteine desulfhydrase family. Homodimer. Requires pyridoxal 5'-phosphate as cofactor.

The catalysed reaction is D-cysteine + H2O = hydrogen sulfide + pyruvate + NH4(+) + H(+). Catalyzes the alpha,beta-elimination reaction of D-cysteine and of several D-cysteine derivatives. It could be a defense mechanism against D-cysteine. The protein is D-cysteine desulfhydrase of Salmonella typhimurium (strain LT2 / SGSC1412 / ATCC 700720).